The sequence spans 91 residues: B3 domain-containing protein Os03g0164300 (91 aa).

The TF-B3 DNA-binding region spans 1–91 (MTNAKMTFAV…VLVLKVHVLK (91 aa)).

It localises to the nucleus. This is B3 domain-containing protein Os03g0164300 from Oryza sativa subsp. japonica (Rice).